The chain runs to 463 residues: MKFPESLKGLKILVLGGGISGNSALNFLISEKAQPILCDQNQPERTVVPFFPDNIPPQSLPEVSLVIKSPGILPTHPILSYAADKKIPVVSEIDLGRYFFKGKIIGITGTDGKSTTTSLIAHLLKESFPDLKEGGNLGIPFTSFCKESISLAVLELSSYQLEDSSPLHLDVSVFLNLASDHLERHKTMENYFQAKLKIADLSNSNHTLIVSEKIKERILNSISYQCKLLSFGKTSDSNAFLDENSLKIKTSKFVYDISKFYLPGTHNRENLAASILAAEEIGGKPESIQTRIPLFRGLPHRFQIAGEKLGISFINDSKSTNLHSMLAGMATWKNIDQTCLILGGRPKQEDLKPLYNFLIRGIGCVVLFGEARATWESGIKNIIGEKLYCVENLNDTFEIFKKGNIFPVPGLNKDIIIRLSDSISISSFVFSPACASFDQYKNFEERGNHFLSLVNDFLDQIDS.

An ATP-binding site is contributed by 109 to 115; the sequence is GTDGKST.

This sequence belongs to the MurCDEF family.

It localises to the cytoplasm. The catalysed reaction is UDP-N-acetyl-alpha-D-muramoyl-L-alanine + D-glutamate + ATP = UDP-N-acetyl-alpha-D-muramoyl-L-alanyl-D-glutamate + ADP + phosphate + H(+). It functions in the pathway cell wall biogenesis; peptidoglycan biosynthesis. Its function is as follows. Cell wall formation. Catalyzes the addition of glutamate to the nucleotide precursor UDP-N-acetylmuramoyl-L-alanine (UMA). This is UDP-N-acetylmuramoylalanine--D-glutamate ligase from Leptospira interrogans serogroup Icterohaemorrhagiae serovar Lai (strain 56601).